Reading from the N-terminus, the 314-residue chain is Inositol oxygenase 5 (314 aa).

Substrate contacts are provided by residues Arg-54 and 112–114; that span reads DES. Fe cation-binding residues include His-125, His-150, and Asp-151. Residues Lys-154 and 171-172 contribute to the substrate site; that span reads GD. Fe cation is bound by residues His-223, His-249, and Asp-282. A substrate-binding site is contributed by 249–250; that stretch reads HS.

The protein belongs to the myo-inositol oxygenase family. Fe cation serves as cofactor. As to expression, expressed in flowers and siliques.

The protein resides in the cytoplasm. It catalyses the reaction myo-inositol + O2 = D-glucuronate + H2O + H(+). It functions in the pathway polyol metabolism; myo-inositol degradation into D-glucuronate; D-glucuronate from myo-inositol: step 1/1. Functionally, involved in the biosynthesis of UDP-glucuronic acid (UDP-GlcA), providing nucleotide sugars for cell-wall polymers. May be also involved in plant ascorbate biosynthesis. The protein is Inositol oxygenase 5 (MIOX5) of Arabidopsis thaliana (Mouse-ear cress).